Consider the following 202-residue polypeptide: Recoverin (202 aa).

Glycine 2 carries the N-myristoyl glycine lipid modification. EF-hand domains are found at residues 24–59 (TEEE…FFPE), 61–96 (DPKA…TSAG), 97–132 (KTNQ…IFKM), and 147–182 (TPEK…NKEI). Cysteine 39 is modified (cysteine sulfenic acid (-SOH)). Aspartate 74, asparagine 76, aspartate 78, threonine 80, glutamate 85, aspartate 110, aspartate 112, asparagine 114, threonine 116, and glutamate 121 together coordinate Ca(2+). The tract at residues 189-192 (EPQK) is interaction with GRK1. Residues 191-202 (QKVKEKLKEKKL) form a modulates EF-hand 3 domain calcium binding affinity region.

The protein belongs to the recoverin family. In terms of assembly, homodimer; disulfide-linked. Homodimerization is caused by prolonged intense illumination. May form a complex composed of RHO, GRK1 and RCVRN in a Ca(2+)-dependent manner; RCVRN prevents the interaction between GRK1 and RHO. Interacts (via C-terminus) with GRK1 (via N-terminus); the interaction is Ca(2+)-dependent. Post-translationally, the N-terminal glycine is linked to one of four different types of acyl groups. The most abundant is myristoleate (14:1), but 14:0, 14:2, and 12:0 acyl residues are also present. The Ca(2+) induced exposure of the myristoyl group, known as the calcium-myristoyl switch, promotes RCVRN binding to the photoreceptor cell membranes only when intracellular Ca(2+) concentration is high. In terms of processing, oxidation on Cys-39 occurs in response to prolonged intense illumination and results in the formation of disulfide homodimers, and to a lesser extent disulfide-linked heterodimers. As to expression, expressed in the retina (at protein level). Expressed in the pineal gland (at protein level).

The protein localises to the photoreceptor inner segment. It is found in the cell projection. It localises to the cilium. The protein resides in the photoreceptor outer segment. Its subcellular location is the photoreceptor outer segment membrane. The protein localises to the perikaryon. Functionally, acts as a calcium sensor and regulates phototransduction of cone and rod photoreceptor cells. Modulates light sensitivity of cone photoreceptor in dark and dim conditions. In response to high Ca(2+) levels induced by low light levels, prolongs RHO/rhodopsin activation in rod photoreceptor cells by binding to and inhibiting GRK1-mediated phosphorylation of RHO/rhodopsin. Plays a role in scotopic vision/enhances vision in dim light by enhancing signal transfer between rod photoreceptors and rod bipolar cells. Improves rod photoreceptor sensitivity in dim light and mediates response of rod photoreceptors to facilitate detection of change and motion in bright light. This Bos taurus (Bovine) protein is Recoverin (RCVRN).